A 516-amino-acid chain; its full sequence is Probable D,D-dipeptide-binding periplasmic protein DdpA (516 aa).

An N-terminal signal peptide occupies residues 1 to 25 (MKRSISFRPTLLALVLATNFPVAHA).

Belongs to the bacterial solute-binding protein 5 family. In terms of assembly, the complex is composed of two ATP-binding proteins (DdpD and DdpF), two transmembrane proteins (DdpB and DdpC) and a solute-binding protein (DdpA).

The protein resides in the periplasm. Part of the ABC transporter complex DdpABCDF, which is probably involved in D,D-dipeptide transport. The polypeptide is Probable D,D-dipeptide-binding periplasmic protein DdpA (ddpA) (Escherichia coli (strain K12)).